The primary structure comprises 284 residues: 2-dehydro-3-deoxyphosphooctonate aldolase (284 aa).

The protein belongs to the KdsA family.

The protein localises to the cytoplasm. It carries out the reaction D-arabinose 5-phosphate + phosphoenolpyruvate + H2O = 3-deoxy-alpha-D-manno-2-octulosonate-8-phosphate + phosphate. Its pathway is carbohydrate biosynthesis; 3-deoxy-D-manno-octulosonate biosynthesis; 3-deoxy-D-manno-octulosonate from D-ribulose 5-phosphate: step 2/3. The protein operates within bacterial outer membrane biogenesis; lipopolysaccharide biosynthesis. The chain is 2-dehydro-3-deoxyphosphooctonate aldolase from Edwardsiella ictaluri (strain 93-146).